Reading from the N-terminus, the 120-residue chain is Small ribosomal subunit protein uS13 (120 aa).

The segment at 97–120 (PVRGQRTKTNARTRKGKKKTVGAK) is disordered.

This sequence belongs to the universal ribosomal protein uS13 family. As to quaternary structure, part of the 30S ribosomal subunit. Forms a loose heterodimer with protein S19. Forms two bridges to the 50S subunit in the 70S ribosome.

Its function is as follows. Located at the top of the head of the 30S subunit, it contacts several helices of the 16S rRNA. In the 70S ribosome it contacts the 23S rRNA (bridge B1a) and protein L5 of the 50S subunit (bridge B1b), connecting the 2 subunits; these bridges are implicated in subunit movement. Contacts the tRNAs in the A and P-sites. The chain is Small ribosomal subunit protein uS13 from Nitratiruptor sp. (strain SB155-2).